The following is a 439-amino-acid chain: Ribosomal protein uS12 methylthiotransferase RimO (439 aa).

The 113-residue stretch at 7-119 folds into the MTTase N-terminal domain; that stretch reads KQLCLISLGC…IDILIAKKQN (113 aa). The [4Fe-4S] cluster site is built by Cys16, Cys50, Cys82, Cys151, Cys155, and Cys158. One can recognise a Radical SAM core domain in the interval 137 to 368; the sequence is TGSSVHAYVK…ALKHQNHSFK (232 aa).

This sequence belongs to the methylthiotransferase family. RimO subfamily. Requires [4Fe-4S] cluster as cofactor.

The protein resides in the cytoplasm. It catalyses the reaction L-aspartate(89)-[ribosomal protein uS12]-hydrogen + (sulfur carrier)-SH + AH2 + 2 S-adenosyl-L-methionine = 3-methylsulfanyl-L-aspartate(89)-[ribosomal protein uS12]-hydrogen + (sulfur carrier)-H + 5'-deoxyadenosine + L-methionine + A + S-adenosyl-L-homocysteine + 2 H(+). Functionally, catalyzes the methylthiolation of an aspartic acid residue of ribosomal protein uS12. This chain is Ribosomal protein uS12 methylthiotransferase RimO, found in Helicobacter pylori (strain HPAG1).